The following is a 174-amino-acid chain: Protein COFACTOR ASSEMBLY OF COMPLEX C SUBUNIT B CCB3, chloroplastic (174 aa).

Residues 1 to 39 (MTTVTTSFVSFSPALMIFQKKSRRSSPNFRNRSTSLPIV) constitute a chloroplast transit peptide. Topologically, residues 40-78 (SATLSHIEEAATTTNLIRQTNSISESLRNISLADLDPGT) are lumenal. The helical transmembrane segment at 79 to 99 (AKLAIGILGPALSAFGFLFIL) threads the bilayer. Residues 100 to 147 (RIVMSWYPKLPVDKFPYVLAYAPTEPILVQTRKVIPPLAGVDVTPVVW) lie on the Stromal side of the membrane. The helical transmembrane segment at 148 to 168 (FGLVSFLSEILVGPQGLLVLV) threads the bilayer. Topologically, residues 169–174 (SQQQVN) are lumenal.

The protein belongs to the YggT family.

Its subcellular location is the plastid. The protein resides in the chloroplast thylakoid membrane. In terms of biological role, required for the biogenesis and accumulation of native cytochrome b6 in the thylakoid membrane. Controls the conversion of apocytochrome b6 to holocytochrome b6. Required for covalent binding of the c-type heme to cytochrome b6. The protein is Protein COFACTOR ASSEMBLY OF COMPLEX C SUBUNIT B CCB3, chloroplastic of Arabidopsis thaliana (Mouse-ear cress).